The following is a 348-amino-acid chain: NADH-quinone oxidoreductase subunit H (348 aa).

Transmembrane regions (helical) follow at residues 21-41 (IIGI…IIYA), 87-107 (GLFL…WAVI), 120-140 (IGLL…IIAG), 166-186 (IGFV…SAIV), 193-213 (IFGF…AVVF), 258-278 (NVIL…LPPV), 283-303 (LYMV…FFVF), and 323-343 (WKVF…WLML).

It belongs to the complex I subunit 1 family. NDH-1 is composed of 14 different subunits. Subunits NuoA, H, J, K, L, M, N constitute the membrane sector of the complex.

The protein resides in the cell inner membrane. The catalysed reaction is a quinone + NADH + 5 H(+)(in) = a quinol + NAD(+) + 4 H(+)(out). NDH-1 shuttles electrons from NADH, via FMN and iron-sulfur (Fe-S) centers, to quinones in the respiratory chain. The immediate electron acceptor for the enzyme in this species is believed to be ubiquinone. Couples the redox reaction to proton translocation (for every two electrons transferred, four hydrogen ions are translocated across the cytoplasmic membrane), and thus conserves the redox energy in a proton gradient. This subunit may bind ubiquinone. This chain is NADH-quinone oxidoreductase subunit H, found in Rhizorhabdus wittichii (strain DSM 6014 / CCUG 31198 / JCM 15750 / NBRC 105917 / EY 4224 / RW1) (Sphingomonas wittichii).